The chain runs to 1020 residues: LLGL scribble cell polarity complex component 2 (1020 aa).

WD repeat units follow at residues 36–69, 76–117, 132–169, 193–227, 233–264, 282–324, 332–364, 386–462, 506–581, 590–651, 710–766, 775–827, 832–884, and 898–921; these read SALGFSPSLELLAIGTRSGAIKLYGAPGVEFMGL, VTQV…IGRF, VTAVLAHSSGELLLLGTEGGHVFVVEVPGFRELEENNI, TLHENPLNPRQVLIGYSRGLMVLWDLDRQRPVQHF, LESVWWMEDGESILSSHSDGSYCQWTVTGEDP, AISK…KTHE, IIDFFVIREGENHKGEPSALVVLVEEELVVVDL, TCSH…YKLS, QKIH…FALV, TAIA…LRQS, VRTL…KEIQ, GLVV…VSSK, LTAV…VHYP, and VFTKYGQGFYLISPSEFERFSLST. Positions 935–968 are disordered; the sequence is LQMRSKSPSSPVHRDLPDGVPTEHRNFKGDSEGY. The span at 946 to 965 shows a compositional bias: basic and acidic residues; the sequence is VHRDLPDGVPTEHRNFKGDS.

Belongs to the WD repeat L(2)GL family. In terms of processing, phosphorylated.

The protein localises to the cytoplasm. It is found in the cytoskeleton. Functionally, essential for hemidesmosome formation and maintenance of the cytoskeleton elements as well as cellular morphology in the basal epidermis during development. Also involved in regulating growth of the basal epidermis. The chain is LLGL scribble cell polarity complex component 2 (llgl2) from Danio rerio (Zebrafish).